Consider the following 173-residue polypeptide: T-cell surface glycoprotein CD3 delta chain (173 aa).

An N-terminal signal peptide occupies residues 1–21; that stretch reads MEHSGILASLILIAVLPQGSP. The Extracellular segment spans residues 22-105; sequence FKIQVTEYED…CVELDSGTMA (84 aa). A disulfide bridge links cysteine 37 with cysteine 73. Asparagine 38, asparagine 55, and asparagine 74 each carry an N-linked (GlcNAc...) asparagine glycan. A helical transmembrane segment spans residues 106–126; sequence GVIFIDLIATLLLALGVYCFA. Residues 127-173 lie on the Cytoplasmic side of the membrane; it reads GHETGRPSGAAEVQALLKNEQLYQPLRDREDTQYSRLGGNWPRNKKS. The ITAM domain occupies 138-166; that stretch reads EVQALLKNEQLYQPLRDREDTQYSRLGGN. 2 positions are modified to phosphotyrosine: tyrosine 149 and tyrosine 160.

The TCR-CD3 complex is composed of a CD3D/CD3E and a CD3G/CD3E heterodimers that preferentially associate with TCRalpha and TCRbeta, respectively, to form TCRalpha/CD3E/CD3G and TCRbeta/CD3G/CD3E trimers. In turn, the hexamer interacts with CD3Z homodimer to form the TCR-CD3 complex. Alternatively, TCRalpha and TCRbeta can be replaced by TCRgamma and TCRdelta. Interacts with coreceptors CD4 and CD8. Phosphorylated on Tyr residues after T-cell receptor triggering by LCK in association with CD4/CD8.

It is found in the membrane. In terms of biological role, part of the TCR-CD3 complex present on T-lymphocyte cell surface that plays an essential role in adaptive immune response. When antigen presenting cells (APCs) activate T-cell receptor (TCR), TCR-mediated signals are transmitted across the cell membrane by the CD3 chains CD3D, CD3E, CD3G and CD3Z. All CD3 chains contain immunoreceptor tyrosine-based activation motifs (ITAMs) in their cytoplasmic domain. Upon TCR engagement, these motifs become phosphorylated by Src family protein tyrosine kinases LCK and FYN, resulting in the activation of downstream signaling pathways. In addition of this role of signal transduction in T-cell activation, CD3D plays an essential role in thymocyte differentiation. Indeed, participates in correct intracellular TCR-CD3 complex assembly and surface expression. In absence of a functional TCR-CD3 complex, thymocytes are unable to differentiate properly. Interacts with CD4 and CD8 and thus serves to establish a functional link between the TCR and coreceptors CD4 and CD8, which is needed for activation and positive selection of CD4 or CD8 T-cells. The chain is T-cell surface glycoprotein CD3 delta chain (Cd3d) from Mus musculus (Mouse).